The primary structure comprises 366 residues: Chorismate synthase (366 aa).

The NADP(+) site is built by R48 and R54. Residues 125 to 127 (RSS), 238 to 239 (NA), G278, 293 to 297 (KPTSS), and R319 contribute to the FMN site.

This sequence belongs to the chorismate synthase family. Homotetramer. FMNH2 is required as a cofactor.

The enzyme catalyses 5-O-(1-carboxyvinyl)-3-phosphoshikimate = chorismate + phosphate. It functions in the pathway metabolic intermediate biosynthesis; chorismate biosynthesis; chorismate from D-erythrose 4-phosphate and phosphoenolpyruvate: step 7/7. Catalyzes the anti-1,4-elimination of the C-3 phosphate and the C-6 proR hydrogen from 5-enolpyruvylshikimate-3-phosphate (EPSP) to yield chorismate, which is the branch point compound that serves as the starting substrate for the three terminal pathways of aromatic amino acid biosynthesis. This reaction introduces a second double bond into the aromatic ring system. The polypeptide is Chorismate synthase (Herminiimonas arsenicoxydans).